A 442-amino-acid polypeptide reads, in one-letter code: Tubulin beta chain (442 aa).

Residues Gln11, Glu69, Ser138, Gly142, Thr143, Gly144, Asn204, and Asn226 each coordinate GTP. A Mg(2+)-binding site is contributed by Glu69.

It belongs to the tubulin family. As to quaternary structure, dimer of alpha and beta chains. A typical microtubule is a hollow water-filled tube with an outer diameter of 25 nm and an inner diameter of 15 nM. Alpha-beta heterodimers associate head-to-tail to form protofilaments running lengthwise along the microtubule wall with the beta-tubulin subunit facing the microtubule plus end conferring a structural polarity. Microtubules usually have 13 protofilaments but different protofilament numbers can be found in some organisms and specialized cells. Requires Mg(2+) as cofactor.

Its subcellular location is the cytoplasm. The protein localises to the cytoskeleton. Its function is as follows. Tubulin is the major constituent of microtubules, a cylinder consisting of laterally associated linear protofilaments composed of alpha- and beta-tubulin heterodimers. Microtubules grow by the addition of GTP-tubulin dimers to the microtubule end, where a stabilizing cap forms. Below the cap, tubulin dimers are in GDP-bound state, owing to GTPase activity of alpha-tubulin. This chain is Tubulin beta chain (bPT2), found in Paramecium tetraurelia.